A 274-amino-acid chain; its full sequence is THAP domain-containing protein 8 (274 aa).

Residues 1–85 (MPKYCRAPNC…LRPDAVPSIF (85 aa)) form a THAP-type zinc finger. Residues 83 to 121 (SIFSRGPPAKSQRRTRSTQKPVSPPPPLQKNTPLPQSPA) are disordered.

The chain is THAP domain-containing protein 8 (THAP8) from Homo sapiens (Human).